A 127-amino-acid chain; its full sequence is Large ribosomal subunit protein bL17 (127 aa).

This sequence belongs to the bacterial ribosomal protein bL17 family. In terms of assembly, part of the 50S ribosomal subunit. Contacts protein L32.

The sequence is that of Large ribosomal subunit protein bL17 from Lacticaseibacillus casei (strain BL23) (Lactobacillus casei).